Consider the following 453-residue polypeptide: Bifunctional protein GlmU (453 aa).

The pyrophosphorylase stretch occupies residues Met-1 to Arg-231. UDP-N-acetyl-alpha-D-glucosamine is bound by residues Leu-10–Gly-13, Lys-24, Gln-77, Gly-82–Thr-83, Tyr-105–Asp-107, Gly-143, Glu-157, Asn-172, and Asn-229. Asp-107 contacts Mg(2+). Residue Asn-229 participates in Mg(2+) binding. Residues Ala-232–Asp-252 form a linker region. The segment at Gly-253–Ser-453 is N-acetyltransferase. UDP-N-acetyl-alpha-D-glucosamine-binding residues include Arg-318 and Lys-336. Catalysis depends on His-348, which acts as the Proton acceptor. The UDP-N-acetyl-alpha-D-glucosamine site is built by Tyr-351 and Asn-362. Residues Ala-365, Asn-371 to Tyr-372, Ser-390, Ser-408, and Arg-425 each bind acetyl-CoA.

It in the N-terminal section; belongs to the N-acetylglucosamine-1-phosphate uridyltransferase family. In the C-terminal section; belongs to the transferase hexapeptide repeat family. As to quaternary structure, homotrimer. The cofactor is Mg(2+).

The protein resides in the cytoplasm. The catalysed reaction is alpha-D-glucosamine 1-phosphate + acetyl-CoA = N-acetyl-alpha-D-glucosamine 1-phosphate + CoA + H(+). The enzyme catalyses N-acetyl-alpha-D-glucosamine 1-phosphate + UTP + H(+) = UDP-N-acetyl-alpha-D-glucosamine + diphosphate. The protein operates within nucleotide-sugar biosynthesis; UDP-N-acetyl-alpha-D-glucosamine biosynthesis; N-acetyl-alpha-D-glucosamine 1-phosphate from alpha-D-glucosamine 6-phosphate (route II): step 2/2. It participates in nucleotide-sugar biosynthesis; UDP-N-acetyl-alpha-D-glucosamine biosynthesis; UDP-N-acetyl-alpha-D-glucosamine from N-acetyl-alpha-D-glucosamine 1-phosphate: step 1/1. Its pathway is bacterial outer membrane biogenesis; LPS lipid A biosynthesis. Its function is as follows. Catalyzes the last two sequential reactions in the de novo biosynthetic pathway for UDP-N-acetylglucosamine (UDP-GlcNAc). The C-terminal domain catalyzes the transfer of acetyl group from acetyl coenzyme A to glucosamine-1-phosphate (GlcN-1-P) to produce N-acetylglucosamine-1-phosphate (GlcNAc-1-P), which is converted into UDP-GlcNAc by the transfer of uridine 5-monophosphate (from uridine 5-triphosphate), a reaction catalyzed by the N-terminal domain. The polypeptide is Bifunctional protein GlmU (Agrobacterium fabrum (strain C58 / ATCC 33970) (Agrobacterium tumefaciens (strain C58))).